We begin with the raw amino-acid sequence, 518 residues long: Homoserine O-acetyltransferase (518 aa).

The AB hydrolase-1 domain occupies 69–468 (NVMVICHALT…DSPEGHDAFL (400 aa)). Residue Ser182 is part of the active site. The active-site Nucleophile is the Ser182. Residues 267–365 (RFGRNIPDPS…PNSVSDPFRP (99 aa)) form a disordered region. A compositionally biased stretch (basic and acidic residues) spans 290 to 303 (PAEEHYDIHNEGFR). Positions 310-341 (RSSTTTSDAPPSPTRTSSTSSTDAITPASTTP) are enriched in low complexity. Active-site residues include Asp435 and His464.

This sequence belongs to the AB hydrolase superfamily. MetX family.

The catalysed reaction is L-homoserine + acetyl-CoA = O-acetyl-L-homoserine + CoA. It participates in amino-acid biosynthesis; L-methionine biosynthesis via de novo pathway; O-acetyl-L-homoserine from L-homoserine: step 1/1. Its function is as follows. Commits homoserine to the methionine biosynthesis pathway by catalyzing its O-acetylation. This Ascobolus immersus protein is Homoserine O-acetyltransferase (MET2).